A 3953-amino-acid chain; its full sequence is Zinc finger protein 469 (3953 aa).

14 disordered regions span residues 1-274 (MPGE…VSFQ), 313-465 (WPEE…MFFN), 512-672 (EWQG…FPFP), 763-784 (GHQRSPGPPGLPSPPAAPRVPA), 869-1383 (ADEE…HSEL), 1400-1461 (PKPS…DLPV), 1575-1610 (LQRSKDTRGAPRELAEAESVGRVELGTGTEPPSQRR), 1703-1864 (SKTG…GASS), 1884-1947 (VSNT…TVEG), 1991-2030 (KTQGQGTANQLQPENGVSPGGTDNHASVNASPKTALTGPT), 2070-2700 (LTAA…TLGP), 2716-2915 (AGET…LSDS), 3001-3036 (EMPAPADDSSSSLGDVSPEPPSLERERCDGGLPGNT), and 3072-3110 (GPSFLDFEGTASSQGPQSRRTEEAAGAGRAQGRGRPAKG). Residues 187–198 (PPSSFTSTNYTS) show a composition bias toward polar residues. 2 stretches are compositionally biased toward pro residues: residues 202 to 211 (TPRPPAPGPP) and 324 to 335 (YPLPTQPAPSPL). Over residues 603–623 (STCSSLSPMSSSPANPSSEES) the composition is skewed to low complexity. Composition is skewed to pro residues over residues 768–780 (PGPPGLPSPPAAP) and 896–911 (KAPPPLPAATPDPQTP). Positions 944–953 (QQRRGKQLKL) are enriched in basic residues. Positions 963–975 (AAEGSGSGGGGRA) are enriched in gly residues. Residues 981-991 (RRNDGLGERPP) show a composition bias toward basic and acidic residues. Residues 1005 to 1017 (RADPAPRVPRAAA) are compositionally biased toward low complexity. Basic residues-rich tracts occupy residues 1025–1042 (SRRRRLPPRKDPRKRKAR) and 1058–1070 (KNRRHRRLGRRAG). Over residues 1082-1093 (PGAEDRRLREYD) the composition is skewed to basic and acidic residues. Residues 1094-1103 (FASESEEDEQ) show a composition bias toward acidic residues. Residues 1120–1137 (KRKEVELTQGPREDEPQK) show a composition bias toward basic and acidic residues. The segment covering 1158 to 1177 (PGGSRPGPGRSPQARGPSRS) has biased composition (low complexity). The span at 1213 to 1229 (EETRPSLDFPQEAKEPE) shows a compositional bias: basic and acidic residues. 2 stretches are compositionally biased toward polar residues: residues 1278-1290 (PKPSGSLANTAPH) and 1333-1350 (NPSSTACPKPSVLSSKIS). A compositionally biased stretch (basic and acidic residues) spans 1577 to 1595 (RSKDTRGAPRELAEAESVG). Polar residues-rich tracts occupy residues 1991–2005 (KTQGQGTANQLQPEN) and 2014–2024 (NHASVNASPKT). A compositionally biased stretch (basic and acidic residues) spans 2243–2262 (DTPKDSTLRIPEDSRKEKLW). Over residues 2409–2435 (TAPSSTASDFQSDSPQSHRNASHQTPQ) the composition is skewed to polar residues. The C2H2-type 1 zinc finger occupies 2472–2498 (VTCEVCAASFRSGPGLSRHKARKHRPH). Over residues 2488–2498 (SRHKARKHRPH) the composition is skewed to basic residues. Positions 2506-2521 (SPAALPAQQPLEPLAQ) are enriched in low complexity. The span at 2534 to 2546 (SGKERPNHSRGDP) shows a compositional bias: basic and acidic residues. Positions 2565 to 2574 (PGSPHSQQLH) are enriched in low complexity. Residues 2592–2631 (PRPDQAREDELHPKQAEKREGRRWRREPTVDSPSHSEGKS) are compositionally biased toward basic and acidic residues. The span at 2632 to 2642 (NKKRGKLRGRR) shows a compositional bias: basic residues. Residues 2664-2676 (PSPAMASYAASPS) show a composition bias toward low complexity. Residues 2777-2787 (DSSRAHSRSEE) show a composition bias toward basic and acidic residues. Over residues 2805 to 2816 (TSSSPADSTTSS) the composition is skewed to low complexity. The segment covering 2869-2879 (LTRKRNPHVYG) has biased composition (basic residues). Residues 3095-3105 (AAGAGRAQGRG) are compositionally biased toward low complexity. The segment at 3115 to 3137 (YKCKVCFQRFRSLGELDLHKLAH) adopts a C2H2-type 2 zinc-finger fold. Residues 3232 to 3322 (TEPAPKHHRG…PDPWAGGEPL (91 aa)) are disordered. A compositionally biased stretch (basic and acidic residues) spans 3260 to 3272 (GEAKKDSPGERAK). Positions 3302-3314 (PGPPRTTPSPSPD) are enriched in pro residues. 2 consecutive C2H2-type zinc fingers follow at residues 3337–3359 (RDCHHCGKRFPKPFKLQRHLAVH) and 3365–3388 (YLCPRCPRVYPEHGELLAHLGGAH). The C2H2-type 5; degenerate zinc finger occupies 3418–3442 (FACSSCNYTFAKKEQFDRHMNKHLR). Disordered regions lie at residues 3448 to 3501 (FAFR…PILS), 3518 to 3559 (STTK…SPFP), and 3576 to 3925 (ERPE…HRTA). A compositionally biased stretch (low complexity) spans 3584-3602 (PGSPGPLLQQALPLGASLP). A compositionally biased stretch (basic and acidic residues) spans 3633–3651 (CAPDHFQEDHLLQKEKEVS). 2 stretches are compositionally biased toward low complexity: residues 3728–3741 (PGPSSQGSGSPRPG) and 3749–3759 (QPQPASGQLQS). Composition is skewed to basic and acidic residues over residues 3876-3892 (EQRKAEPGHTQRKDRLG) and 3915-3925 (EPAEPHTHRTA).

It belongs to the krueppel C2H2-type zinc-finger protein family. In terms of tissue distribution, detected in cornea, sclera, skin fibroblasts and striated muscle.

Its subcellular location is the nucleus. In terms of biological role, may be involved in transcriptional regulation. The polypeptide is Zinc finger protein 469 (ZNF469) (Homo sapiens (Human)).